An 820-amino-acid chain; its full sequence is Sodium/hydrogen exchanger 1 (820 aa).

The Extracellular portion of the chain corresponds to 1–102; it reads MMLRWSGIWG…FPVLDIDYLH (102 aa). The interval 44–71 is disordered; sequence ASTIRGSEPPRERSIGDVTTAPSEPLHH. Residues 103–125 form a helical membrane-spanning segment; it reads VRTPFEISLWILLACLMKIGFHV. Topologically, residues 126-134 are cytoplasmic; it reads IPTISSIVP. Residues 135–152 form a helical membrane-spanning segment; it reads ESCLLIVVGLLVGGLIKG. Residues 153–162 lie on the Extracellular side of the membrane; sequence VGETPPFLQS. A helical transmembrane segment spans residues 163–180; it reads DVFFLFLLPPIILDAGYF. Residues 181 to 190 lie on the Cytoplasmic side of the membrane; the sequence is LPLRQFTENL. The helical transmembrane segment at 191–219 threads the bilayer; it reads GTILIFAVVGTLWNAFFLGGLLYAVCLVG. Over 220–226 the chain is Extracellular; the sequence is GEQINNI. The helical transmembrane segment at 227 to 253 threads the bilayer; that stretch reads GLLDTLLFGSIISAVDPVAVLAVFEEI. Over 254-256 the chain is Cytoplasmic; sequence HIN. A helical membrane pass occupies residues 257 to 287; that stretch reads ELLHILVFGESLLNDAVTVVLYHLFEEFASY. The Extracellular segment spans residues 288-291; sequence EYVG. A helical membrane pass occupies residues 292 to 326; it reads ISDIFLGFLSFFVVSLGGVFVGVVYGVIAAFTSRF. The Cytoplasmic portion of the chain corresponds to 327–332; that stretch reads TSHIRV. A helical membrane pass occupies residues 333-345; the sequence is IEPLFVFLYSYMA. Over 346 to 354 the chain is Extracellular; that stretch reads YLSAELFHL. The helical transmembrane segment at 355–375 threads the bilayer; the sequence is SGIMALIASGVVMRPYVEANI. Topologically, residues 376 to 377 are cytoplasmic; that stretch reads SH. The helical transmembrane segment at 378–408 threads the bilayer; that stretch reads KSHTTIKYFLKMWSSVSETLIFIFLGVSTVA. Residues 409-414 lie on the Extracellular side of the membrane; the sequence is GSHQWN. A helical transmembrane segment spans residues 415–442; the sequence is WTFVISTLLFCLIARVLGVLVLTWFINK. The Cytoplasmic portion of the chain corresponds to 443 to 448; sequence FRIVKL. Residues 449–473 traverse the membrane as a helical segment; sequence TPKDQFIIAYGGLRGAIAFSLGYLL. Topologically, residues 474–479 are extracellular; the sequence is DKKHFP. The chain crosses the membrane as a helical span at residues 480 to 509; that stretch reads MCDLFLTAIITVIFFTVFVQGMTIRPLVDL. Residues 505-571 form an interaction with TESC region; that stretch reads PLVDLLAVKK…VKKCLIAGER (67 aa). Residues 510-820 lie on the Cytoplasmic side of the membrane; the sequence is LAVKKKQETK…EGEPFIPKGQ (311 aa). Residues 513 to 520 are PI(4,5)P2-binding region; that stretch reads KKKQETKR. The tract at residues 519 to 549 is interaction with CHP2; it reads KRSINEEIHTQFLDHLLTGIEDICGHYGHHH. Residues 544 to 549 form a confers pH-dependent PI(4,5)P2 binding region; sequence HYGHHH. Residues 556–564 form a PI(4,5)P2-binding region region; sequence RFNKKYVKK. Residues Ser603 and Ser606 each carry the phosphoserine modification. Thr607 is modified (phosphothreonine). 2 positions are modified to phosphoserine: Ser609 and Ser652. Residues 637–820 form an interaction with TESC region; that stretch reads KILRSNLQKT…EGEPFIPKGQ (184 aa). Residues 637–820 are interaction with CALM1; the sequence is KILRSNLQKT…EGEPFIPKGQ (184 aa). Residues 688 to 691 form an interaction with PPP3CA region; that stretch reads LTVP. Ser697, Ser701, and Ser707 each carry phosphoserine. Residues 719–724 are interaction with PPP3CA; the sequence is PVITID. 3 positions are modified to phosphoserine: Ser727, Ser730, and Ser733. Residues 747–820 are disordered; sequence GLKRGPRTTP…EGEPFIPKGQ (74 aa). Phosphothreonine is present on residues Thr755 and Thr784. Ser790 and Ser801 each carry phosphoserine.

Belongs to the monovalent cation:proton antiporter 1 (CPA1) transporter (TC 2.A.36) family. In terms of assembly, homodimer; dimerization is crucial for its function. Oligomer. Interacts with CALM1 in a calcium-dependent manner. Interacts with TESC. Interacts (via residues 504-563) with CHP1. The interaction with CHP1 occurs at the plasma membrane in a calcium-dependent manner. Interacts with CHP2. The interaction with CHP2 occurs in a calcium-dependent manner. Interacts with EZR; regulates the cytoskeletal interactions of SLC9A1 and promotes stress fiber formation. N-glycosylated and O-glycosylated in the N-terminal region. In terms of processing, ubiquitinated, leading to its degradation by the proteasome. Ubiquitination is reduced by CHP1. Post-translationally, palmitoylated; may play a major role in SLC9A1 regulation. Phosphorylation at Thr-784 increases SLC9A1 activity; specifically dephosphorylated by PPP3CA. Specifically dephosphorylated at Thr-784 by PPP3CA that negatively regulates SLC9A1 activity. Phosphorylation at Ser-652 by AKT1 reduces SLC9A1 binding to CALM1. As to expression, widely expressed.

It localises to the cell membrane. The protein localises to the basolateral cell membrane. It catalyses the reaction Na(+)(in) + H(+)(out) = Na(+)(out) + H(+)(in). It carries out the reaction Li(+)(out) + H(+)(in) = Li(+)(in) + H(+)(out). The enzyme catalyses Li(+)(in) + Na(+)(out) = Li(+)(out) + Na(+)(in). Its activity is regulated as follows. Activated at acidic pHs. Inhibited by cariporide and eniporide. Inhibited by amiloride and 5-amino-substituted derivatives. Phosphatidylinositol 4,5-bisphosphate (PI(4,5)P2) bind and activates SLC9A1 transporter activity. Electroneutral Na(+) /H(+) antiporter that extrudes Na(+) in exchange for external protons driven by the inward sodium ion chemical gradient, protecting cells from acidification that occurs from metabolism. Exchanges intracellular H(+) ions for extracellular Na(+) in 1:1 stoichiometry. Plays a key role in maintening intracellular pH neutral and cell volume, and thus is important for cell growth, proliferation, migration and survival. In addition, can transport lithium Li(+) and also functions as a Na(+)/Li(+) antiporter. SLC9A1 also functions in membrane anchoring and organization of scaffolding complexes that coordinate signaling inputs. This Rattus norvegicus (Rat) protein is Sodium/hydrogen exchanger 1 (Slc9a1).